The sequence spans 415 residues: Esterase FrsA (415 aa).

The protein belongs to the FrsA family.

The catalysed reaction is a carboxylic ester + H2O = an alcohol + a carboxylate + H(+). Catalyzes the hydrolysis of esters. This is Esterase FrsA from Yersinia enterocolitica serotype O:8 / biotype 1B (strain NCTC 13174 / 8081).